We begin with the raw amino-acid sequence, 211 residues long: Uridine kinase (211 aa).

13–20 (GASASGKS) contacts ATP.

This sequence belongs to the uridine kinase family.

It localises to the cytoplasm. It catalyses the reaction uridine + ATP = UMP + ADP + H(+). The catalysed reaction is cytidine + ATP = CMP + ADP + H(+). The protein operates within pyrimidine metabolism; CTP biosynthesis via salvage pathway; CTP from cytidine: step 1/3. It functions in the pathway pyrimidine metabolism; UMP biosynthesis via salvage pathway; UMP from uridine: step 1/1. This Shewanella pealeana (strain ATCC 700345 / ANG-SQ1) protein is Uridine kinase.